A 205-amino-acid polypeptide reads, in one-letter code: ATP phosphoribosyltransferase (205 aa).

Belongs to the ATP phosphoribosyltransferase family. Short subfamily.

The protein resides in the cytoplasm. The catalysed reaction is 1-(5-phospho-beta-D-ribosyl)-ATP + diphosphate = 5-phospho-alpha-D-ribose 1-diphosphate + ATP. The protein operates within amino-acid biosynthesis; L-histidine biosynthesis; L-histidine from 5-phospho-alpha-D-ribose 1-diphosphate: step 1/9. Catalyzes the condensation of ATP and 5-phosphoribose 1-diphosphate to form N'-(5'-phosphoribosyl)-ATP (PR-ATP). Has a crucial role in the pathway because the rate of histidine biosynthesis seems to be controlled primarily by regulation of HisG enzymatic activity. The polypeptide is ATP phosphoribosyltransferase (Thermococcus gammatolerans (strain DSM 15229 / JCM 11827 / EJ3)).